The following is a 133-amino-acid chain: p53 and DNA damage-regulated protein 1 (133 aa).

Belongs to the prefoldin subunit beta family. In terms of assembly, component of the PAQosome complex which is responsible for the biogenesis of several protein complexes and which consists of R2TP complex members RUVBL1, RUVBL2, RPAP3 and PIH1D1, URI complex members PFDN2, PFDN6, PDRG1, UXT and URI1 as well as ASDURF, POLR2E and DNAAF10/WDR92.

Its subcellular location is the cytoplasm. May play a role in chaperone-mediated protein folding. The protein is p53 and DNA damage-regulated protein 1 (PDRG1) of Pongo abelii (Sumatran orangutan).